The sequence spans 347 residues: N-acetyl-gamma-glutamyl-phosphate reductase (347 aa).

Cys-151 is an active-site residue.

It belongs to the NAGSA dehydrogenase family. Type 1 subfamily.

The protein localises to the cytoplasm. It carries out the reaction N-acetyl-L-glutamate 5-semialdehyde + phosphate + NADP(+) = N-acetyl-L-glutamyl 5-phosphate + NADPH + H(+). The protein operates within amino-acid biosynthesis; L-arginine biosynthesis; N(2)-acetyl-L-ornithine from L-glutamate: step 3/4. Its function is as follows. Catalyzes the NADPH-dependent reduction of N-acetyl-5-glutamyl phosphate to yield N-acetyl-L-glutamate 5-semialdehyde. The polypeptide is N-acetyl-gamma-glutamyl-phosphate reductase (Corynebacterium aurimucosum (strain ATCC 700975 / DSM 44827 / CIP 107346 / CN-1) (Corynebacterium nigricans)).